A 238-amino-acid polypeptide reads, in one-letter code: Probable transcriptional regulatory protein llmg_0242 (238 aa).

This sequence belongs to the TACO1 family. YeeN subfamily.

Its subcellular location is the cytoplasm. The polypeptide is Probable transcriptional regulatory protein llmg_0242 (Lactococcus lactis subsp. cremoris (strain MG1363)).